The chain runs to 82 residues: Immediate early response 3-interacting protein 1 (82 aa).

The next 2 helical transmembrane spans lie at 2–22 and 62–82; these read AFTLYSLLQAALLCVNAIAVL and VMRVPLIIVNSIAIVLLLLFG.

It belongs to the YOS1 family.

The protein resides in the endoplasmic reticulum membrane. Functionally, regulator of endoplasmic reticulum secretion that acts as a key determinant of brain size. Required for secretion of extracellular matrix proteins. Required for correct brain development by depositing sufficient extracellular matrix proteins for tissue integrity and the proliferation of neural progenitors. Acts as a regulator of the unfolded protein response (UPR). The sequence is that of Immediate early response 3-interacting protein 1 from Bos taurus (Bovine).